The sequence spans 302 residues: uncharacterized protein (302 aa).

This sequence belongs to the HAD-like hydrolase superfamily.

It localises to the cytoplasm. Its subcellular location is the nucleus. This is an uncharacterized protein from Schizosaccharomyces pombe (strain 972 / ATCC 24843) (Fission yeast).